The sequence spans 198 residues: Ribonuclease HII (198 aa).

The RNase H type-2 domain occupies 10–198 (QLVAGVDEVG…PVKRALGLAS (189 aa)). Asp-16, Glu-17, and Asp-108 together coordinate a divalent metal cation.

This sequence belongs to the RNase HII family. Mn(2+) is required as a cofactor. It depends on Mg(2+) as a cofactor.

The protein resides in the cytoplasm. The enzyme catalyses Endonucleolytic cleavage to 5'-phosphomonoester.. In terms of biological role, endonuclease that specifically degrades the RNA of RNA-DNA hybrids. The protein is Ribonuclease HII of Shigella sonnei (strain Ss046).